A 432-amino-acid polypeptide reads, in one-letter code: Interleukin-11 receptor subunit alpha-1 (432 aa).

The first 23 residues, 1-23, serve as a signal peptide directing secretion; sequence MSSSCSGLTRVLVAVATALVSSS. Over 24 to 372 the chain is Extracellular; sequence SPCPQAWGPP…DPLEQVAVLA (349 aa). One can recognise an Ig-like C2-type domain in the interval 27 to 110; it reads PQAWGPPGVQ…SGGMVTLKLG (84 aa). Cystine bridges form between cysteine 48–cysteine 94, cysteine 120–cysteine 130, and cysteine 170–cysteine 180. Fibronectin type-III domains lie at 112–219 and 220–317; these read PPAR…LRPD and PPQG…TPST. A glycan (N-linked (GlcNAc...) asparagine) is linked at asparagine 127. A disordered region spans residues 151–170; sequence KTLPGAESQRESPSTGPWPC. An N-linked (GlcNAc...) asparagine glycan is attached at asparagine 194. A WSXWS motif motif is present at residues 304–308; that stretch reads WSAWS. 2 disordered regions span residues 309-332 and 342-361; these read PEAW…QGHG and EDSP…PLDH. The chain crosses the membrane as a helical span at residues 373-393; that stretch reads SLGIFSCLGLAVGALALGLWL. The Cytoplasmic portion of the chain corresponds to 394–432; the sequence is RLRRSGKDGPQKPGLLAPMIPVEKLPGIPNLQRTPENFS.

This sequence belongs to the type I cytokine receptor family. Type 3 subfamily. On IL11 binding, forms a multimer complex with IL6ST/gp130. In terms of processing, a short soluble form is also released from the membrane by proteolysis. The sIL11RA is formed either by limited proteolysis of membrane-bound receptors, a process referred to as ectodomain shedding, or directly secreted from the cells after alternative mRNA splicing. mIL11RA is cleaved by the proteases ADAM10, ELANE and PRTN3. In terms of tissue distribution, widely expressed in all adult tissues and in embryos. Highest levels in kidney, skeletal muscle and embryo.

It localises to the membrane. The protein localises to the secreted. In terms of biological role, receptor for interleukin-11. The receptor systems for IL6, LIF, OSM, CNTF, IL11 and CT1 can utilize IL6ST for initiating signal transmission. The IL11/IL11RA/IL6ST complex may be involved in the control of proliferation and/or differentiation of skeletogenic progenitor or other mesenchymal cells. Essential for the normal development of craniofacial bones and teeth. Functionally, soluble form of IL11 receptor (sIL11RA) that acts as an agonist of IL11 activity. The IL11:sIL11RA complex binds to IL6ST/gp130 on cell surfaces and induces signaling also on cells that do not express membrane-bound IL11RA in a process called IL11 trans-signaling. This chain is Interleukin-11 receptor subunit alpha-1, found in Mus musculus (Mouse).